The chain runs to 619 residues: Chaperone protein DnaK (619 aa).

Thr-175 carries the phosphothreonine; by autocatalysis modification. The tract at residues 578–619 (NGGAQGQGFDPNNMGGANAGAGATNNNDDNVVDADFEVQDDK) is disordered. Over residues 589 to 606 (NNMGGANAGAGATNNNDD) the composition is skewed to low complexity. The segment covering 607-619 (NVVDADFEVQDDK) has biased composition (acidic residues).

Belongs to the heat shock protein 70 family.

Its function is as follows. Acts as a chaperone. This is Chaperone protein DnaK from Clostridium perfringens (strain ATCC 13124 / DSM 756 / JCM 1290 / NCIMB 6125 / NCTC 8237 / Type A).